The sequence spans 515 residues: Tetratricopeptide repeat protein 8 (515 aa).

A TPR 1 repeat occupies 4-37 (EMEPLLRAWSYFRRRKFQLCADLCTQMLEKSPYD). 2 disordered regions span residues 89 to 109 (RPGTSLKLPGTNQTGGPTQAV) and 118 to 137 (PITGFLRPSTQSGRPGTMEQ). TPR repeat units lie at residues 225–258 (WWWKVQIGKCYYRLGMYREAEKQFKSALKQQEMV), 259–291 (DTFLYLAKVYIILDQPVTALNLFKQGLDKFPGE), 292–325 (VTLLCGIARIYEEMNNSSSAAEYYKEVLKQDNTH), 326–359 (VEAIACIGSNHFYSDQPEVALRFYRRLLQMGVYN), 360–393 (CQLFNNLGLCCFYAQQYDMTLTSFERALSLAENE), 397–430 (ADVWYNLGHIAVGIGDTNLAHQCFRLALVHNNHH), and 432–464 (EAYNNLAVLEMRKGHVEQARALLQTASSLAPHM).

As to quaternary structure, part of BBSome complex, that contains BBS1, BBS2, BBS4, BBS5, BBS7, BBS8/TTC8, BBS9 and BBIP10. Interacts with PCM1. Interacts with CCDC28B. Interacts with PKD1. As to expression, isoform 1 is retina-specific whereas isoform 2 is ubiquitously expressed.

The protein resides in the cytoplasm. Its subcellular location is the cytoskeleton. It is found in the microtubule organizing center. The protein localises to the centrosome. It localises to the centriole. The protein resides in the cell projection. Its subcellular location is the cilium membrane. It is found in the centriolar satellite. The protein localises to the cilium. Its function is as follows. The BBSome complex is thought to function as a coat complex required for sorting of specific membrane proteins to the primary cilia. The BBSome complex is required for ciliogenesis but is dispensable for centriolar satellite function. This ciliogenic function is mediated in part by the Rab8 GDP/GTP exchange factor, which localizes to the basal body and contacts the BBSome. Rab8(GTP) enters the primary cilium and promotes extension of the ciliary membrane. Firstly the BBSome associates with the ciliary membrane and binds to RAB3IP/Rabin8, the guanosyl exchange factor (GEF) for Rab8 and then the Rab8-GTP localizes to the cilium and promotes docking and fusion of carrier vesicles to the base of the ciliary membrane. The BBSome complex, together with the LTZL1, controls SMO ciliary trafficking and contributes to the sonic hedgehog (SHH) pathway regulation. Required for proper BBSome complex assembly and its ciliary localization. The protein is Tetratricopeptide repeat protein 8 (Ttc8) of Mus musculus (Mouse).